A 455-amino-acid polypeptide reads, in one-letter code: tRNA-2-methylthio-N(6)-dimethylallyladenosine synthase (455 aa).

The MTTase N-terminal domain maps to 18-136 (KLFFIQTYGC…FPEYLNRVKT (119 aa)). Residues C27, C63, C97, C173, C177, and C180 each contribute to the [4Fe-4S] cluster site. The Radical SAM core domain maps to 159–389 (RKSDIKGFVT…VEIVNTGIAK (231 aa)). Residues 392–455 (KDAEGKIYEV…SFSLIGEVEK (64 aa)) form the TRAM domain.

The protein belongs to the methylthiotransferase family. MiaB subfamily. As to quaternary structure, monomer. [4Fe-4S] cluster is required as a cofactor.

The protein localises to the cytoplasm. The enzyme catalyses N(6)-dimethylallyladenosine(37) in tRNA + (sulfur carrier)-SH + AH2 + 2 S-adenosyl-L-methionine = 2-methylsulfanyl-N(6)-dimethylallyladenosine(37) in tRNA + (sulfur carrier)-H + 5'-deoxyadenosine + L-methionine + A + S-adenosyl-L-homocysteine + 2 H(+). Its function is as follows. Catalyzes the methylthiolation of N6-(dimethylallyl)adenosine (i(6)A), leading to the formation of 2-methylthio-N6-(dimethylallyl)adenosine (ms(2)i(6)A) at position 37 in tRNAs that read codons beginning with uridine. In Clostridium beijerinckii (strain ATCC 51743 / NCIMB 8052) (Clostridium acetobutylicum), this protein is tRNA-2-methylthio-N(6)-dimethylallyladenosine synthase.